A 649-amino-acid polypeptide reads, in one-letter code: Acetyl-coenzyme A synthetase (649 aa).

CoA is bound by residues 191-194, Thr312, and Asn336; that span reads RGGR. Residues 388-390, 412-417, Asp501, and Arg516 contribute to the ATP site; these read GEP and DTWWQT. A CoA-binding site is contributed by Ser524. Arg527 lines the ATP pocket. The Mg(2+) site is built by Val538, His540, and Val543. Arg585 lines the CoA pocket. Lys610 bears the N6-acetyllysine mark.

The protein belongs to the ATP-dependent AMP-binding enzyme family. Mg(2+) serves as cofactor. Post-translationally, acetylated. Deacetylation by the SIR2-homolog deacetylase activates the enzyme.

It catalyses the reaction acetate + ATP + CoA = acetyl-CoA + AMP + diphosphate. In terms of biological role, catalyzes the conversion of acetate into acetyl-CoA (AcCoA), an essential intermediate at the junction of anabolic and catabolic pathways. AcsA undergoes a two-step reaction. In the first half reaction, AcsA combines acetate with ATP to form acetyl-adenylate (AcAMP) intermediate. In the second half reaction, it can then transfer the acetyl group from AcAMP to the sulfhydryl group of CoA, forming the product AcCoA. The chain is Acetyl-coenzyme A synthetase from Marinobacter nauticus (strain ATCC 700491 / DSM 11845 / VT8) (Marinobacter aquaeolei).